Here is a 499-residue protein sequence, read N- to C-terminus: Ubiquitin carboxyl-terminal hydrolase 16 (499 aa).

In terms of domain architecture, USP spans 53 to 497; the sequence is VGLINRGNDC…YAYMLYYERV (445 aa). Cys-62 (nucleophile) is an active-site residue. His-407 (proton acceptor) is an active-site residue.

The protein belongs to the peptidase C19 family.

The enzyme catalyses Thiol-dependent hydrolysis of ester, thioester, amide, peptide and isopeptide bonds formed by the C-terminal Gly of ubiquitin (a 76-residue protein attached to proteins as an intracellular targeting signal).. The chain is Ubiquitin carboxyl-terminal hydrolase 16 (UBP16) from Saccharomyces cerevisiae (strain ATCC 204508 / S288c) (Baker's yeast).